Consider the following 243-residue polypeptide: MKWKEQAVILGTRQYGETSIILEVMTRQHGRYMGIVKGGHSRRMAGLLQPGNFVEAEWWARLDEHLGLFRLEALDLYAARLILLPEALYALQLIVFHLRLLPERDPYPSLYDILHLFMQNFDESFVNAELLVRFEMRLLEELGFGLDLSRCAATGRQERLFYVSPKSGRAVCEEAGRPWKEKLLTLPQFLVRRAIRPVNFSDIINGFILTGFFLMRHVWEPRGIKQPSVRVNLIQLFERRFRM.

Belongs to the RecO family.

Its function is as follows. Involved in DNA repair and RecF pathway recombination. The chain is DNA repair protein RecO from Bartonella quintana (strain Toulouse) (Rochalimaea quintana).